Reading from the N-terminus, the 197-residue chain is Protein GrpE (197 aa).

The disordered stretch occupies residues 1–43; sequence MSSKEQKTPDGQAPEEIVTEQHEEVESVESAESAEQVDPRDEE.

This sequence belongs to the GrpE family. In terms of assembly, homodimer.

Its subcellular location is the cytoplasm. Its function is as follows. Participates actively in the response to hyperosmotic and heat shock by preventing the aggregation of stress-denatured proteins, in association with DnaK and GrpE. It is the nucleotide exchange factor for DnaK and may function as a thermosensor. Unfolded proteins bind initially to DnaJ; upon interaction with the DnaJ-bound protein, DnaK hydrolyzes its bound ATP, resulting in the formation of a stable complex. GrpE releases ADP from DnaK; ATP binding to DnaK triggers the release of the substrate protein, thus completing the reaction cycle. Several rounds of ATP-dependent interactions between DnaJ, DnaK and GrpE are required for fully efficient folding. This chain is Protein GrpE, found in Cronobacter sakazakii (strain ATCC BAA-894) (Enterobacter sakazakii).